The following is a 988-amino-acid chain: Ubiquitin carboxyl-terminal hydrolase 36 (988 aa).

Positions 16 to 55 are disordered; that stretch reads PTLRTDNNGARKQAEHPNNQSHHNHPHPTSNPNELPKPKR. The span at 31–48 shows a compositional bias: low complexity; sequence HPNNQSHHNHPHPTSNPN. Positions 78 to 386 constitute a USP domain; that stretch reads TGMINVGNTC…NAYIMFFELD (309 aa). The active-site Nucleophile is the cysteine 87. Histidine 345 functions as the Proton acceptor in the catalytic mechanism. Disordered stretches follow at residues 393-422, 483-782, and 868-988; these read PPAN…SPSP, ATSA…VTSN, and EQRQ…QQQT. Low complexity-rich tracts occupy residues 408–422 and 490–509; these read STTP…SPSP and NGNK…KSIN. A phosphoserine mark is found at serine 419 and serine 421. The segment covering 532–544 has biased composition (polar residues); sequence TTAQLPSMPNMTE. A phosphothreonine mark is found at threonine 561 and threonine 565. A phosphoserine mark is found at serine 575 and serine 577. The segment covering 592–601 has biased composition (acidic residues); the sequence is EGEDFSESDQ. Residues 602-631 show a composition bias toward polar residues; it reads ESGQTNGHSKTNGSLTNGSASSSVHVNNSK. A compositionally biased stretch (basic and acidic residues) spans 632–649; that stretch reads QKTDAIDEIFKSLKKSAD. Serine 650 carries the post-translational modification Phosphoserine. The span at 650–659 shows a compositional bias: acidic residues; that stretch reads SEEDDDEEEP. The span at 669-679 shows a compositional bias: low complexity; the sequence is PQKQSQSQSKA. A compositionally biased stretch (pro residues) spans 680–689; it reads PPSPKTPPSP. Serine 682 carries the phosphoserine modification. Threonine 685 bears the Phosphothreonine mark. A Phosphoserine modification is found at serine 688. The span at 707-717 shows a compositional bias: acidic residues; the sequence is VDAIDDDDDAV. A Phosphothreonine modification is found at threonine 728. The span at 735-747 shows a compositional bias: polar residues; the sequence is NPFSSSKPSTDSP. At serine 746 the chain carries Phosphoserine. At threonine 749 the chain carries Phosphothreonine. The segment covering 762-782 has biased composition (polar residues); sequence ALKSHQQPRVGNGYQSNVTSN. Low complexity-rich tracts occupy residues 892-903 and 930-943; these read SGSAKGNNASNS and RFHN…FQQR.

The protein belongs to the peptidase C19 family. In terms of assembly, interacts with atms/PAF1, but not with CycT.

It localises to the nucleus. The protein localises to the nucleolus. It carries out the reaction Thiol-dependent hydrolysis of ester, thioester, amide, peptide and isopeptide bonds formed by the C-terminal Gly of ubiquitin (a 76-residue protein attached to proteins as an intracellular targeting signal).. Its function is as follows. Required for maintaining multiple types of adult stem cells, including male and female germline, epithelial follicle cell and intestinal stem cells. May function as a transcriptional repressor by continually deubiquiting histone H2B at the promoters of genes critical for cellular differentiation, thereby preventing histone H3 'Lys-4' trimethylation (H3K4). Controls selective autophagy activation by ubiquitinated proteins. This chain is Ubiquitin carboxyl-terminal hydrolase 36 (Usp36), found in Drosophila simulans (Fruit fly).